The chain runs to 156 residues: RNA polymerase sigma factor SigS (156 aa).

A Polymerase core binding motif is present at residues 29 to 44 (EYYQLLLIKMWQLSQI). The segment at residues 126-145 (QFEIAEIMSLSLSTIKLIKM) is a DNA-binding region (H-T-H motif).

This sequence belongs to the sigma-70 factor family.

Its function is as follows. Sigma factors are initiation factors that promote the attachment of RNA polymerase to specific initiation sites and are then released. Sigma-S contributes to the protection against external stress, thus playing a role in cellular fitness and survival. This chain is RNA polymerase sigma factor SigS (sigS), found in Staphylococcus aureus (strain NCTC 8325 / PS 47).